We begin with the raw amino-acid sequence, 385 residues long: Chaperone protein DnaJ (385 aa).

Positions 5-70 constitute a J domain; the sequence is DYYEILEITR…SKRQIYDKYG (66 aa). A CR-type zinc finger spans residues 136-213; that stretch reads GCKKEIHNSF…CKGSGFEISE (78 aa). The Zn(2+) site is built by Cys-149, Cys-152, Cys-165, Cys-168, Cys-187, Cys-190, Cys-201, and Cys-204. 4 CXXCXGXG motif repeats span residues 149–156, 165–172, 187–194, and 201–208; these read CSDCKGTG, CKDCGGKG, CPTCKGEG, and CSKCKGSG.

The protein belongs to the DnaJ family. In terms of assembly, homodimer. Requires Zn(2+) as cofactor.

The protein localises to the cytoplasm. Functionally, participates actively in the response to hyperosmotic and heat shock by preventing the aggregation of stress-denatured proteins and by disaggregating proteins, also in an autonomous, DnaK-independent fashion. Unfolded proteins bind initially to DnaJ; upon interaction with the DnaJ-bound protein, DnaK hydrolyzes its bound ATP, resulting in the formation of a stable complex. GrpE releases ADP from DnaK; ATP binding to DnaK triggers the release of the substrate protein, thus completing the reaction cycle. Several rounds of ATP-dependent interactions between DnaJ, DnaK and GrpE are required for fully efficient folding. Also involved, together with DnaK and GrpE, in the DNA replication of plasmids through activation of initiation proteins. This is Chaperone protein DnaJ from Helicobacter hepaticus (strain ATCC 51449 / 3B1).